Consider the following 94-residue polypeptide: Acylphosphatase (94 aa).

The Acylphosphatase-like domain maps to 8-94 (RLTAWVHGRV…REQITGFHER (87 aa)). Active-site residues include arginine 23 and asparagine 41.

It belongs to the acylphosphatase family.

The catalysed reaction is an acyl phosphate + H2O = a carboxylate + phosphate + H(+). The protein is Acylphosphatase (acyP) of Mycobacterium sp. (strain JLS).